Reading from the N-terminus, the 341-residue chain is MLSLKEFNTFGLSAYAKRLDIAESAESLLALWQKAKSEKQPVLLLGGGSNVLFTTNFEGTVILNRIMGIQQRETDESWHLHVGAGENWHELVCHSLKNQIYGLENLALIPGCSGAAPIQNIGAYGIEFRDVCEYVDVLNLETGEQTRLSVGECQFRYRDSIFKHKYKANHSIISVGLLLKKNWQPILNYGNLTRLSKDNVTPQQIFDSVCAMRTSKLPDPAITGNAGSFFKNPIVSAEVAAKIKENYPDSPQYSYTNGMFKLAAAWLIERCNLKGYRIGGASVHLRQALVLINQENATGKDVVLLAAYIRRQVISKFGVLLEPEVRFIGSKGEIDAVECIS.

Residues 12–182 (LSAYAKRLDI…ISVGLLLKKN (171 aa)) form the FAD-binding PCMH-type domain. Residue R158 is part of the active site. Residue S228 is the Proton donor of the active site. E324 is an active-site residue.

Belongs to the MurB family. It depends on FAD as a cofactor.

It localises to the cytoplasm. It catalyses the reaction UDP-N-acetyl-alpha-D-muramate + NADP(+) = UDP-N-acetyl-3-O-(1-carboxyvinyl)-alpha-D-glucosamine + NADPH + H(+). Its pathway is cell wall biogenesis; peptidoglycan biosynthesis. Its function is as follows. Cell wall formation. This Photorhabdus laumondii subsp. laumondii (strain DSM 15139 / CIP 105565 / TT01) (Photorhabdus luminescens subsp. laumondii) protein is UDP-N-acetylenolpyruvoylglucosamine reductase.